Reading from the N-terminus, the 259-residue chain is Protein FAM220A (259 aa).

2 disordered regions span residues 1-44 and 131-154; these read MRDR…ADAP and LGGGPRATDGHRGQCPKGEPRVSR. The segment covering 138–152 has biased composition (basic and acidic residues); the sequence is TDGHRGQCPKGEPRV.

As to quaternary structure, interacts with transcriptional activator STAT3; the interaction occurs in both the nucleus and the cytoplasm, is enhanced by IL6 and promotes STAT3 dephosphorylation, leading to negative regulation of STAT3 transcriptional activator activity. Can interact with both unphosphorylated and phosphorylated STAT3 but interacts preferentially with phosphorylated STAT3 in the nucleus. Interacts with protein phosphatase PTPN2/TC45; this promotes interaction of PTPN2 with STAT3, leading to dephosphorylation of STAT3 by PTPN2.

The protein localises to the nucleus. It localises to the cytoplasm. The protein resides in the cytoplasmic vesicle. It is found in the secretory vesicle. Its subcellular location is the acrosome. Its function is as follows. Promotes dephosphorylation of transcriptional activator STAT3 by interacting with both STAT3 and protein phosphatase PTPN2. This promotes interaction of PTPN2 with STAT3 and mediates STAT3 dephosphorylation by PTPN2, leading to negative regulation of STAT3 transcriptional activator activity. May be required for spermiogenesis or sperm function. The chain is Protein FAM220A from Homo sapiens (Human).